Here is a 577-residue protein sequence, read N- to C-terminus: Eukaryotic translation initiation factor 3 subunit D (577 aa).

Positions 103 to 177 are disordered; sequence DSTKTRFGRG…KDYDKPQRNR (75 aa). Basic and acidic residues predominate over residues 166–177; it reads GWKDYDKPQRNR. The interval 305–319 is RNA gate; that stretch reads TLDMVTVNENAADAP. The tract at residues 558 to 577 is disordered; the sequence is GSFEDDGEGDVIEENVEEED. Acidic residues predominate over residues 560–577; that stretch reads FEDDGEGDVIEENVEEED.

The protein belongs to the eIF-3 subunit D family. In terms of assembly, component of the eukaryotic translation initiation factor 3 (eIF-3) complex.

The protein localises to the cytoplasm. In terms of biological role, mRNA cap-binding component of the eukaryotic translation initiation factor 3 (eIF-3) complex, which is involved in protein synthesis of a specialized repertoire of mRNAs and, together with other initiation factors, stimulates binding of mRNA and methionyl-tRNAi to the 40S ribosome. The eIF-3 complex specifically targets and initiates translation of a subset of mRNAs involved in cell proliferation. In the eIF-3 complex, eif3d specifically recognizes and binds the 7-methylguanosine cap of a subset of mRNAs. The protein is Eukaryotic translation initiation factor 3 subunit D of Sclerotinia sclerotiorum (strain ATCC 18683 / 1980 / Ss-1) (White mold).